Reading from the N-terminus, the 277-residue chain is Putative hydro-lyase BPP3031 (277 aa).

Belongs to the D-glutamate cyclase family.

This chain is Putative hydro-lyase BPP3031, found in Bordetella parapertussis (strain 12822 / ATCC BAA-587 / NCTC 13253).